The sequence spans 268 residues: UPF0294 protein ETA_26410 (268 aa).

This sequence belongs to the UPF0294 family.

The protein localises to the cytoplasm. The sequence is that of UPF0294 protein ETA_26410 from Erwinia tasmaniensis (strain DSM 17950 / CFBP 7177 / CIP 109463 / NCPPB 4357 / Et1/99).